The following is a 152-amino-acid chain: Transcriptional regulator MraZ (152 aa).

SpoVT-AbrB domains lie at 5–52 (ATLV…PLPE) and 81–124 (ASEC…DETT).

The protein belongs to the MraZ family. As to quaternary structure, forms oligomers.

The protein localises to the cytoplasm. The protein resides in the nucleoid. Functionally, negatively regulates its own expression and that of the subsequent genes in the proximal part of the division and cell wall (dcw) gene cluster. Acts by binding directly to DNA. May also regulate the expression of genes outside the dcw cluster. This chain is Transcriptional regulator MraZ, found in Shigella flexneri serotype 5b (strain 8401).